A 496-amino-acid chain; its full sequence is Catalase-A (496 aa).

Active-site residues include His-54 and Asn-128. A heme-binding site is contributed by Tyr-338. Positions 494–496 (SNL) match the Microbody targeting signal motif.

The protein belongs to the catalase family. Heme is required as a cofactor.

The protein resides in the peroxisome matrix. The enzyme catalyses 2 H2O2 = O2 + 2 H2O. Functionally, catalyzes the degradation of hydrogen peroxide (H(2)O(2)) generated by peroxisomal oxidases to water and oxygen, thereby protecting cells from the toxic effects of hydrogen peroxide. This chain is Catalase-A (catA), found in Dictyostelium discoideum (Social amoeba).